The following is an 89-amino-acid chain: UPF0175 protein ssl1255 (89 aa).

It belongs to the UPF0175 family.

This is UPF0175 protein ssl1255 from Synechocystis sp. (strain ATCC 27184 / PCC 6803 / Kazusa).